The sequence spans 400 residues: Golgin-45 (400 aa).

A compositionally biased stretch (polar residues) spans 1–16 (MTTKNLETKVTVTSSP). Residues 1-58 (MTTKNLETKVTVTSSPIRGAGDGMETEEPPKSVEVTSGVQSRKHHSLQSPWKKAVPSE) are disordered. Serine 15 is modified (phosphoserine). Positions 18 to 22 (RGAGD) match the Tankyrase-binding motif motif. The residue at position 49 (serine 49) is a Phosphoserine. The stretch at 120 to 213 (NKELSEVKNV…QLERMSIQCD (94 aa)) forms a coiled coil. Residue threonine 348 is modified to Phosphothreonine. Serine 353 carries the phosphoserine modification. The essential for interaction with GORASP2 stretch occupies residues 394–400 (RGELIAL).

In terms of assembly, interacts with GORASP2. Interacts with the GTP-bound form of RAB2, but not with other Golgi Rab proteins. Identified in a complex with RAB2 and GORASP2. Post-translationally, ADP-ribosylated by tankyrase TNKS and TNKS2. Poly-ADP-ribosylated protein is recognized by RNF146, followed by ubiquitination. Ubiquitinated by RNF146 when poly-ADP-ribosylated, leading to its degradation. Detected in adrenal gland.

The protein localises to the golgi apparatus membrane. Its subcellular location is the nucleus. It localises to the cytoplasm. Its function is as follows. Required for normal Golgi structure and for protein transport from the endoplasmic reticulum (ER) through the Golgi apparatus to the cell surface. The chain is Golgin-45 (BLZF1) from Homo sapiens (Human).